The sequence spans 353 residues: Protein RecA (353 aa).

Residue 80 to 87 (GPESSGKT) participates in ATP binding.

This sequence belongs to the RecA family.

The protein resides in the cytoplasm. In terms of biological role, can catalyze the hydrolysis of ATP in the presence of single-stranded DNA, the ATP-dependent uptake of single-stranded DNA by duplex DNA, and the ATP-dependent hybridization of homologous single-stranded DNAs. It interacts with LexA causing its activation and leading to its autocatalytic cleavage. The chain is Protein RecA from Chlorobium chlorochromatii (strain CaD3).